The primary structure comprises 151 residues: UPF0178 protein Hhal_1913 (151 aa).

It belongs to the UPF0178 family.

The sequence is that of UPF0178 protein Hhal_1913 from Halorhodospira halophila (strain DSM 244 / SL1) (Ectothiorhodospira halophila (strain DSM 244 / SL1)).